We begin with the raw amino-acid sequence, 96 residues long: Putative translation initiation factor IF-1, chloroplastic (96 aa).

In terms of domain architecture, S1-like spans 18–57; sequence INYVSGKIRHSFIRILPGDRVKIEVSPYDSTKGRIIYRLH.

Belongs to the IF-1 family. Component of the 30S ribosomal translation pre-initiation complex which assembles on the 30S ribosome in the order IF-2 and IF-3, IF-1 and N-formylmethionyl-tRNA(fMet); mRNA recruitment can occur at any time during PIC assembly.

The protein resides in the plastid. Its subcellular location is the chloroplast. Functionally, one of the essential components for the initiation of protein synthesis. Stabilizes the binding of IF-2 and IF-3 on the 30S subunit to which N-formylmethionyl-tRNA(fMet) subsequently binds. Helps modulate mRNA selection, yielding the 30S pre-initiation complex (PIC). Upon addition of the 50S ribosomal subunit IF-1, IF-2 and IF-3 are released leaving the mature 70S translation initiation complex. In Nicotiana tabacum (Common tobacco), this protein is Putative translation initiation factor IF-1, chloroplastic (infA).